Consider the following 400-residue polypeptide: Tektin-B1 (400 aa).

Coiled coils occupy residues 35 to 81 (TRLS…AKAL), 236 to 294 (FALR…LENR), and 310 to 353 (GLVN…LELK).

This sequence belongs to the tektin family. May form a heterodimer with tektin a or exist as a homodimer. In terms of tissue distribution, cilia and flagella.

The protein resides in the cytoplasm. It localises to the cytoskeleton. Functionally, structural component of ciliary and flagellar microtubules. This chain is Tektin-B1, found in Strongylocentrotus purpuratus (Purple sea urchin).